The following is a 412-amino-acid chain: MHSHTNETAATSTTAGAVTNGAGGSGAGAAGAHGSTEGKIRCIFLSEFHATAGCKISCQVPDNYISKDVFDAINVYIIPKQHLQRCILTVNAMDVKIVGYPVGIQDQQKYARNAFLFNLCFVCDSRARSVQYEPVVKKLSEYLIMMEEESCFLSREDDKRRLQNIFETVLRDLNERKVATIVEGDNTIYLKIVMHKPDPPPVKDHMVPLLLANLRDAPLDNWDLTTQQILPYINGINHVARIAAEADVETDLVKSCIQNLVYYGVVQLLPILKYSNVYMTQNLKHLIQSASLSGACRKYVALRPDKTLPSVQRIFQFYASMTHGVTLRAICQRLCPQHHNIDERRMVIFGLQHRFIRCIHKYPVFTGSVPSGRQKMYTGLISFDEICCKTGLSPCTIERDIEKDTNVTVIWK.

The protein belongs to the NPR2 family. As to quaternary structure, component of the GATOR complex consisting of mio, Nup44A/Seh1, Im11, Nplr3, Nplr2, Wdr24, Wdr59 and Sec13. Within the GATOR complex, probable component of the GATOR1 subcomplex which is likely composed of Iml1, Nplr2 and Nplr3. Interacts with Nprl3.

The protein localises to the cytoplasm. It is found in the lysosome. An essential component of the GATOR subcomplex GATOR1 which functions as an inhibitor of the amino acid-sensing branch of the TORC1 signaling pathway. The two GATOR subcomplexes, GATOR1 and GATOR2, regulate the TORC1 pathway in order to mediate metabolic homeostasis, female gametogenesis and the response to amino acid limitation and complete starvation. The function of GATOR1 in negatively regulating the TORC1 pathway is essential for maintaining baseline levels of TORC1 activity under nutrient rich conditions, and for promoting survival during amino acid or complete starvation by inhibiting TORC1-dependent cell growth and promoting catabolic metabolism and autophagy. In addition, this inhibition of TORC1 is necessary to maintain female fertility under normal conditions and during periods of nutrient stress. GATOR1 and GATOR2 act at different stages of oogenesis to regulate TORC1 in order to control meiotic entry and promote oocyte growth and development. After exactly four mitotic cyst divisions, the GATOR1 complex members (Iml1, Nprl2 and Nprl3) down-regulate TORC1 to slow cellular metabolism and promote the mitotic/meiotic transition. At later stages of oogenesis, the mio and Nup44A components of the GATOR2 complex inhibit GATOR1 and thus activate TORC1 to promote meiotic progression, and drive oocyte growth and development. The polypeptide is GATOR complex protein NPRL2 (Drosophila melanogaster (Fruit fly)).